A 263-amino-acid polypeptide reads, in one-letter code: Small ribosomal subunit protein eS4 (263 aa).

An S4 RNA-binding domain is found at 42 to 104 (LPLIVFLRNR…TGEHFRLVYD (63 aa)).

It belongs to the eukaryotic ribosomal protein eS4 family.

The protein is Small ribosomal subunit protein eS4 (RPS4Y1) of Gorilla gorilla gorilla (Western lowland gorilla).